Reading from the N-terminus, the 518-residue chain is uncharacterized protein (518 aa).

Transmembrane regions (helical) follow at residues 13–33 (WAIS…GIIS), 49–69 (WGSW…PIVG), 86–106 (CLFG…LFLI), 109–129 (LIQA…ILAT), 141–161 (LLGA…SFLL), 169–189 (WLFL…ACFI), 202–222 (AAGI…MTNL), 231–251 (LGNP…AALI), 280–300 (LIIG…PSYV), 312–332 (GYWM…GGAL), 341–361 (TVIL…LWVT), 365–385 (EFVI…GAPL), 410–430 (IGLT…FDQI), and 493–513 (LYAA…IPAF).

Belongs to the major facilitator superfamily. TCR/Tet family.

It localises to the cell membrane. This is an uncharacterized protein from Bacillus subtilis (strain 168).